The following is a 750-amino-acid chain: GTP pyrophosphokinase rsh (750 aa).

The HD domain maps to 45–144; sequence YFSHPLEVAA…VKLADRLHNM (100 aa). Residues 390 to 451 enclose the TGS domain; the sequence is DQVFCFTPKG…KNGDEVDIIR (62 aa). Residues 587–613 form a disordered region; sequence AAKVDPAATTPKPGKRALPIRGTNPDL. The region spanning 676-750 is the ACT domain; it reads RISVSAINSP…SVSSAKRVNG (75 aa).

It belongs to the RelA/SpoT family.

It catalyses the reaction GTP + ATP = guanosine 3'-diphosphate 5'-triphosphate + AMP. Functions as a (p)ppGpp synthase. In eubacteria ppGpp (guanosine 3'-diphosphate 5'-diphosphate) is a mediator of the stringent response that coordinates a variety of cellular activities in response to changes in nutritional abundance. It is necessary for persistence in mice, essential for intracellular growth of Brucella and required for expression of the type IV secretion system VirB and therefore plays a role in adaptation of Brucella to its intracellular host environment. The polypeptide is GTP pyrophosphokinase rsh (rsh) (Brucella suis biovar 1 (strain 1330)).